A 1331-amino-acid polypeptide reads, in one-letter code: Serine/threonine-protein kinase SSK22 (1331 aa).

One can recognise a Protein kinase domain in the interval tryptophan 1034–methionine 1310. Residues isoleucine 1040 to valine 1048 and lysine 1063 contribute to the ATP site. Residue aspartate 1158 is the Proton acceptor of the active site.

The protein belongs to the protein kinase superfamily. STE Ser/Thr protein kinase family. MAP kinase kinase kinase subfamily. In terms of assembly, interacts with by SSK1.

The catalysed reaction is L-seryl-[protein] + ATP = O-phospho-L-seryl-[protein] + ADP + H(+). The enzyme catalyses L-threonyl-[protein] + ATP = O-phospho-L-threonyl-[protein] + ADP + H(+). Its function is as follows. Kinase involved in a signal transduction pathway that is activated by changes in the osmolarity of the extracellular environment. Activates the PBS2 MAP kinase kinase by phosphorylation. In Saccharomyces cerevisiae (strain ATCC 204508 / S288c) (Baker's yeast), this protein is Serine/threonine-protein kinase SSK22 (SSK22).